The chain runs to 179 residues: Cell division protein ZapC (179 aa).

This sequence belongs to the ZapC family. As to quaternary structure, interacts directly with FtsZ.

It localises to the cytoplasm. Contributes to the efficiency of the cell division process by stabilizing the polymeric form of the cell division protein FtsZ. Acts by promoting interactions between FtsZ protofilaments and suppressing the GTPase activity of FtsZ. In Tolumonas auensis (strain DSM 9187 / NBRC 110442 / TA 4), this protein is Cell division protein ZapC.